We begin with the raw amino-acid sequence, 172 residues long: EPIDERMAL PATTERNING FACTOR-like protein 7 (172 aa).

Positions 1 to 27 are cleaved as a signal peptide; sequence MDHVNPTLFHLKSLSIFTLTLLYISSP. 4 cysteine pairs are disulfide-bonded: Cys128/Cys159, Cys132/Cys138, Cys135/Cys161, and Cys147/Cys153.

It belongs to the plant cysteine rich small secretory peptide family. Epidermal patterning factor subfamily.

The protein resides in the secreted. Its function is as follows. Controls stomatal patterning. The sequence is that of EPIDERMAL PATTERNING FACTOR-like protein 7 from Arabidopsis thaliana (Mouse-ear cress).